A 364-amino-acid polypeptide reads, in one-letter code: Aminomethyltransferase (364 aa).

The protein belongs to the GcvT family. In terms of assembly, the glycine cleavage system is composed of four proteins: P, T, L and H.

The catalysed reaction is N(6)-[(R)-S(8)-aminomethyldihydrolipoyl]-L-lysyl-[protein] + (6S)-5,6,7,8-tetrahydrofolate = N(6)-[(R)-dihydrolipoyl]-L-lysyl-[protein] + (6R)-5,10-methylene-5,6,7,8-tetrahydrofolate + NH4(+). In terms of biological role, the glycine cleavage system catalyzes the degradation of glycine. This chain is Aminomethyltransferase, found in Photorhabdus laumondii subsp. laumondii (strain DSM 15139 / CIP 105565 / TT01) (Photorhabdus luminescens subsp. laumondii).